Reading from the N-terminus, the 439-residue chain is Dihydroorotate dehydrogenase (quinone), mitochondrial (439 aa).

The transit peptide at 1-22 (MMHRVGFNVIGRRSFFTVNARR) directs the protein to the mitochondrion. Residues 37-53 (LTALLLAGSAGYLYFMN) form a helical membrane-spanning segment. Residues 119 to 123 (AGLDK) and serine 143 contribute to the FMN site. Position 123 (lysine 123) interacts with substrate. A substrate-binding site is contributed by 168–172 (NRYGF). Positions 215 and 245 each coordinate FMN. 245-250 (NVSSPN) contributes to the substrate binding site. Serine 248 (nucleophile) is an active-site residue. FMN is bound by residues lysine 296 and serine 324. 325–326 (NT) is a substrate binding site. Residues glycine 350, glycine 380, and 401-402 (YT) contribute to the FMN site.

It belongs to the dihydroorotate dehydrogenase family. Type 2 subfamily. FMN is required as a cofactor.

It is found in the mitochondrion inner membrane. It carries out the reaction (S)-dihydroorotate + a quinone = orotate + a quinol. The protein operates within pyrimidine metabolism; UMP biosynthesis via de novo pathway; orotate from (S)-dihydroorotate (quinone route): step 1/1. Functionally, catalyzes the conversion of dihydroorotate to orotate with quinone as electron acceptor. This chain is Dihydroorotate dehydrogenase (quinone), mitochondrial (URA9), found in Candida glabrata (strain ATCC 2001 / BCRC 20586 / JCM 3761 / NBRC 0622 / NRRL Y-65 / CBS 138) (Yeast).